The sequence spans 265 residues: Hydroxyethylthiazole kinase 2 (265 aa).

Met-39 is a substrate binding site. Positions 115 and 168 each coordinate ATP. A substrate-binding site is contributed by Gly-195.

It belongs to the Thz kinase family. Requires Mg(2+) as cofactor.

It carries out the reaction 5-(2-hydroxyethyl)-4-methylthiazole + ATP = 4-methyl-5-(2-phosphooxyethyl)-thiazole + ADP + H(+). It functions in the pathway cofactor biosynthesis; thiamine diphosphate biosynthesis; 4-methyl-5-(2-phosphoethyl)-thiazole from 5-(2-hydroxyethyl)-4-methylthiazole: step 1/1. In terms of biological role, catalyzes the phosphorylation of the hydroxyl group of 4-methyl-5-beta-hydroxyethylthiazole (THZ). The sequence is that of Hydroxyethylthiazole kinase 2 from Clostridium botulinum (strain 657 / Type Ba4).